We begin with the raw amino-acid sequence, 253 residues long: uncharacterized protein (253 aa).

This is an uncharacterized protein from Ostreid herpesvirus 1 (isolate France) (OsHV-1).